The following is a 365-amino-acid chain: Glutamate 5-kinase 1 (365 aa).

K9 serves as a coordination point for ATP. Substrate is bound by residues S49, D136, and N148. Residues T168–D169 and T210–K216 each bind ATP. The region spanning S276–E353 is the PUA domain.

This sequence belongs to the glutamate 5-kinase family.

The protein resides in the cytoplasm. It carries out the reaction L-glutamate + ATP = L-glutamyl 5-phosphate + ADP. It functions in the pathway amino-acid biosynthesis; L-proline biosynthesis; L-glutamate 5-semialdehyde from L-glutamate: step 1/2. Catalyzes the transfer of a phosphate group to glutamate to form L-glutamate 5-phosphate. The polypeptide is Glutamate 5-kinase 1 (Bacillus licheniformis (strain ATCC 14580 / DSM 13 / JCM 2505 / CCUG 7422 / NBRC 12200 / NCIMB 9375 / NCTC 10341 / NRRL NRS-1264 / Gibson 46)).